We begin with the raw amino-acid sequence, 212 residues long: Protein-L-isoaspartate O-methyltransferase (212 aa).

Residue Ser60 is part of the active site.

This sequence belongs to the methyltransferase superfamily. L-isoaspartyl/D-aspartyl protein methyltransferase family.

It is found in the cytoplasm. It carries out the reaction [protein]-L-isoaspartate + S-adenosyl-L-methionine = [protein]-L-isoaspartate alpha-methyl ester + S-adenosyl-L-homocysteine. Its function is as follows. Catalyzes the methyl esterification of L-isoaspartyl residues in peptides and proteins that result from spontaneous decomposition of normal L-aspartyl and L-asparaginyl residues. It plays a role in the repair and/or degradation of damaged proteins. In Methylorubrum populi (strain ATCC BAA-705 / NCIMB 13946 / BJ001) (Methylobacterium populi), this protein is Protein-L-isoaspartate O-methyltransferase.